The sequence spans 430 residues: Gamma-glutamyl phosphate reductase (430 aa).

It belongs to the gamma-glutamyl phosphate reductase family.

It localises to the cytoplasm. It catalyses the reaction L-glutamate 5-semialdehyde + phosphate + NADP(+) = L-glutamyl 5-phosphate + NADPH + H(+). The protein operates within amino-acid biosynthesis; L-proline biosynthesis; L-glutamate 5-semialdehyde from L-glutamate: step 2/2. Its function is as follows. Catalyzes the NADPH-dependent reduction of L-glutamate 5-phosphate into L-glutamate 5-semialdehyde and phosphate. The product spontaneously undergoes cyclization to form 1-pyrroline-5-carboxylate. This chain is Gamma-glutamyl phosphate reductase, found in Rhodopseudomonas palustris (strain HaA2).